The following is a 1230-amino-acid chain: Cullin-associated NEDD8-dissociated protein 1 (1230 aa).

An N-acetylalanine modification is found at A2. 12 HEAT repeats span residues A2 to I39, D44 to E81, Q83 to P119, C131 to Q165, N171 to N208, V210 to H247, R248 to F282, E289 to E366, E370 to P407, P424 to G467, Q471 to P510, and P515 to P552. An N6-acetyllysine modification is found at K55. The disordered stretch occupies residues D315–D344. At S335 the chain carries Phosphoserine. Phosphoserine is present on S558. 15 HEAT repeats span residues P563 to D602, P606 to D643, P646 to D683, A688 to S725, K729 to N768, L770 to R808, A809 to V845, S852 to P889, E890 to P927, Y928 to L960, I961 to Q998, P1002 to S1039, D1043 to L1097, R1099 to L1133, and Q1140 to A1189. At K971 the chain carries N6-acetyllysine.

It belongs to the CAND family. In terms of assembly, interacts with TBP. Part of a complex that contains CUL1 and RBX1. Interacts with unneddylated cullins: interacts with CUL1, CUL2, CUL3, CUL4A, CUL4B and CUL5. Does not bind neddylated CUL1. Interaction with cullins is abolished in presence of COMMD1, which antagonizes with CAND1 for interacting with cullins. Interacts with ERCC6. Interacts with DCUN1D1, DCUN1D2, DCUN1D3, DCUN1D4 and DCUN1D5; these interactions are bridged by cullins and strongly inhibits the neddylation of cullins. As to expression, detected in heart, brain, spleen, liver, skeletal muscle, kidney and testis.

It is found in the cytoplasm. It localises to the nucleus. Its function is as follows. Key assembly factor of SCF (SKP1-CUL1-F-box protein) E3 ubiquitin ligase complexes that promotes the exchange of the substrate-recognition F-box subunit in SCF complexes, thereby playing a key role in the cellular repertoire of SCF complexes. Acts as a F-box protein exchange factor. The exchange activity of CAND1 is coupled with cycles of neddylation conjugation: in the deneddylated state, cullin-binding CAND1 binds CUL1-RBX1, increasing dissociation of the SCF complex and promoting exchange of the F-box protein. Probably plays a similar role in other cullin-RING E3 ubiquitin ligase complexes. May indirectly enhance transcription from various types of promoters. In Rattus norvegicus (Rat), this protein is Cullin-associated NEDD8-dissociated protein 1 (Cand1).